The primary structure comprises 481 residues: Heat stress transcription factor A-1b (481 aa).

Low complexity predominate over residues 1–16 (MESVPESVPSPNSNTP). The disordered stretch occupies residues 1-23 (MESVPESVPSPNSNTPSIPPPVN). The DNA-binding element occupies 25-119 (VPPFLSKTYD…LLKSIVRRKP (95 aa)). Residues 138–204 (ACVEVGKFGI…QMMSFLAKAV (67 aa)) form a hydrophobic repeat HR-A/B region. Residues 213-227 (LVQQNNNDGNRQIPG) are compositionally biased toward polar residues. The tract at residues 213–244 (LVQQNNNDGNRQIPGSNKKRRLPVDEQENRGD) is disordered. The Nuclear localization signal signature appears at 229 to 233 (NKKRR). A compositionally biased stretch (basic and acidic residues) spans 234–243 (LPVDEQENRG). Positions 418 to 427 (DPFWEQFFSV) match the AHA motif. A Nuclear export signal motif is present at residues 467 to 474 (LTEQMGLL).

It belongs to the HSF family. Class A subfamily. In terms of assembly, homotrimer. Binds to HSBP. Post-translationally, exhibits temperature-dependent phosphorylation.

Its subcellular location is the cytoplasm. It localises to the nucleus. Its function is as follows. Transcriptional activator that specifically binds DNA sequence 5'-AGAAnnTTCT-3' known as heat shock promoter elements (HSE). This is Heat stress transcription factor A-1b (HSFA1B) from Arabidopsis thaliana (Mouse-ear cress).